A 347-amino-acid chain; its full sequence is NADH-ubiquinone oxidoreductase chain 2 (347 aa).

Helical transmembrane passes span proline 3–serine 23, histidine 25–methionine 45, tyrosine 59–methionine 79, threonine 96–proline 116, valine 122–leucine 142, isoleucine 149–glycine 169, isoleucine 178–proline 198, methionine 200–methionine 220, serine 242–proline 262, glutamate 274–methionine 294, and methionine 323–leucine 343.

Belongs to the complex I subunit 2 family. As to quaternary structure, core subunit of respiratory chain NADH dehydrogenase (Complex I) which is composed of 45 different subunits. Interacts with TMEM242.

It is found in the mitochondrion inner membrane. It catalyses the reaction a ubiquinone + NADH + 5 H(+)(in) = a ubiquinol + NAD(+) + 4 H(+)(out). Functionally, core subunit of the mitochondrial membrane respiratory chain NADH dehydrogenase (Complex I) that is believed to belong to the minimal assembly required for catalysis. Complex I functions in the transfer of electrons from NADH to the respiratory chain. The immediate electron acceptor for the enzyme is believed to be ubiquinone. This Suricata suricatta (Meerkat) protein is NADH-ubiquinone oxidoreductase chain 2.